The following is a 320-amino-acid chain: Elongation factor Ts (320 aa).

The interval 82-85 is involved in Mg(2+) ion dislocation from EF-Tu; sequence TDFV.

Belongs to the EF-Ts family.

It localises to the cytoplasm. Associates with the EF-Tu.GDP complex and induces the exchange of GDP to GTP. It remains bound to the aminoacyl-tRNA.EF-Tu.GTP complex up to the GTP hydrolysis stage on the ribosome. This is Elongation factor Ts from Flavobacterium johnsoniae (strain ATCC 17061 / DSM 2064 / JCM 8514 / BCRC 14874 / CCUG 350202 / NBRC 14942 / NCIMB 11054 / UW101) (Cytophaga johnsonae).